The primary structure comprises 100 residues: Putative pterin-4-alpha-carbinolamine dehydratase (100 aa).

Belongs to the pterin-4-alpha-carbinolamine dehydratase family.

It carries out the reaction (4aS,6R)-4a-hydroxy-L-erythro-5,6,7,8-tetrahydrobiopterin = (6R)-L-erythro-6,7-dihydrobiopterin + H2O. This chain is Putative pterin-4-alpha-carbinolamine dehydratase, found in Alteromonas mediterranea (strain DSM 17117 / CIP 110805 / LMG 28347 / Deep ecotype).